Here is a 229-residue protein sequence, read N- to C-terminus: NADH dehydrogenase [ubiquinone] iron-sulfur protein 8, mitochondrial (229 aa).

Residues 1–41 (MAAILARKSLSALRSRQLVLAGHTIEGTNGYNRTLLGTRSF) constitute a mitochondrion transit peptide. 4Fe-4S ferredoxin-type domains follow at residues 121–150 (RRYATGEERCIACKLCEAICPAQAITIEAE) and 160–189 (TRYDIDMTKCIYCGFCQEACPVDAIVEGPN). Cys-130, Cys-133, Cys-136, Cys-140, Cys-169, Cys-172, Cys-175, and Cys-179 together coordinate [4Fe-4S] cluster.

Belongs to the complex I 23 kDa subunit family. As to quaternary structure, complex I is composed of about 45 different subunits. This is a component of the iron-sulfur (IP) fragment of the enzyme. It depends on [4Fe-4S] cluster as a cofactor. Lowest expression found in storage tissues of tubers. Higher expression in older leaves than younger ones. Highest expression found in flowers.

Its subcellular location is the mitochondrion inner membrane. It catalyses the reaction a ubiquinone + NADH + 5 H(+)(in) = a ubiquinol + NAD(+) + 4 H(+)(out). In terms of biological role, core subunit of the mitochondrial membrane respiratory chain NADH dehydrogenase (Complex I) that is believed to belong to the minimal assembly required for catalysis. Complex I functions in the transfer of electrons from NADH to the respiratory chain. The immediate electron acceptor for the enzyme is believed to be ubiquinone. May donate electrons to ubiquinone. This Solanum tuberosum (Potato) protein is NADH dehydrogenase [ubiquinone] iron-sulfur protein 8, mitochondrial.